Reading from the N-terminus, the 617-residue chain is MPAYRSRTTTHGRNMAGARALWRATGMKEGDFGKPIIAIANSFTQFVPGHVHLKDLGQLVAREIEKAGGVAKEFHTIAVDDGIAMGHSGMLYSLPSREIIADSVEYMVNAHCADALVCISNCDKITPGMLMAAMRLNIPAVFISGGPMEAGKVKIRGKSVSLDLVDAIVAAVDPAESDADVMAYERSACPTCGSCSGMFTANSMNCLTEALGLALPGNGSLLATHADRKELFLEAGRLIVALAKRYYEQDDETVLPRSIANFGAFENAMSLDIAMGGSTNTVLHLLAAAQEGGVDFTMADIDRLSRKVPNLCKVAPATPEYHMEDVHRAGGVISILGELDRAGLIHRQMATVHSPTLGAALDQWDIVRSSYEAAQSRYLAAPGGVPTQVAFSQGNRWESLDLDRAQGCIRDIAHAYSKDGGLAVLYGNLAKDGCIVKTAGVDPSILIFSGPARLFESQEAAIAAILGDKIQPGDVVLIRYEGPKGGPGMQEMLYPTSYLKSKGLGEVCALITDGRFSGGTSGLSIGHVSPEAAEGGTIGLVEEGDRIEIDIPHRRIHLAVDEEELAQRQRAMEAKAQQAWRPVNRNRTVSLALQAYAALTTSAAKGAVRDLGQLNRS.

Asp-81 is a Mg(2+) binding site. Cys-122 is a binding site for [2Fe-2S] cluster. Mg(2+)-binding residues include Asp-123 and Lys-124. Lys-124 is modified (N6-carboxylysine). A [2Fe-2S] cluster-binding site is contributed by Cys-195. Glu-491 provides a ligand contact to Mg(2+). Catalysis depends on Ser-517, which acts as the Proton acceptor.

The protein belongs to the IlvD/Edd family. Homodimer. [2Fe-2S] cluster serves as cofactor. Mg(2+) is required as a cofactor.

The catalysed reaction is (2R)-2,3-dihydroxy-3-methylbutanoate = 3-methyl-2-oxobutanoate + H2O. It carries out the reaction (2R,3R)-2,3-dihydroxy-3-methylpentanoate = (S)-3-methyl-2-oxopentanoate + H2O. It functions in the pathway amino-acid biosynthesis; L-isoleucine biosynthesis; L-isoleucine from 2-oxobutanoate: step 3/4. The protein operates within amino-acid biosynthesis; L-valine biosynthesis; L-valine from pyruvate: step 3/4. Functionally, functions in the biosynthesis of branched-chain amino acids. Catalyzes the dehydration of (2R,3R)-2,3-dihydroxy-3-methylpentanoate (2,3-dihydroxy-3-methylvalerate) into 2-oxo-3-methylpentanoate (2-oxo-3-methylvalerate) and of (2R)-2,3-dihydroxy-3-methylbutanoate (2,3-dihydroxyisovalerate) into 2-oxo-3-methylbutanoate (2-oxoisovalerate), the penultimate precursor to L-isoleucine and L-valine, respectively. This Nitrosococcus oceani (strain ATCC 19707 / BCRC 17464 / JCM 30415 / NCIMB 11848 / C-107) protein is Dihydroxy-acid dehydratase.